Reading from the N-terminus, the 352-residue chain is uncharacterized protein (352 aa).

A signal peptide spans 1–22 (MIFKKTILIFIISFFFISISFA). Residues 25-47 (SSSSSSSSSSSSSSWSSSESSSS) show a composition bias toward low complexity. The interval 25–49 (SSSSSSSSSSSSSSWSSSESSSSPA) is disordered. N-linked (GlcNAc...) asparagine glycosylation is found at Asn76, Asn110, Asn182, Asn212, and Asn223.

Its subcellular location is the secreted. This is an uncharacterized protein from Dictyostelium discoideum (Social amoeba).